A 92-amino-acid chain; its full sequence is PqqA binding protein (92 aa).

It belongs to the PqqD family. As to quaternary structure, monomer. Interacts with PqqE.

It participates in cofactor biosynthesis; pyrroloquinoline quinone biosynthesis. In terms of biological role, functions as a PqqA binding protein and presents PqqA to PqqE, in the pyrroloquinoline quinone (PQQ) biosynthetic pathway. In Xanthomonas axonopodis pv. citri (strain 306), this protein is PqqA binding protein.